Reading from the N-terminus, the 699-residue chain is Elongation factor G (699 aa).

The region spanning 8–283 (EHIRNIGICA…AVVDFLPSPI (276 aa)) is the tr-type G domain. Residues 17–24 (AHIDAGKT), 81–85 (DTPGH), and 135–138 (NKMD) each bind GTP.

This sequence belongs to the TRAFAC class translation factor GTPase superfamily. Classic translation factor GTPase family. EF-G/EF-2 subfamily.

Its subcellular location is the cytoplasm. Functionally, catalyzes the GTP-dependent ribosomal translocation step during translation elongation. During this step, the ribosome changes from the pre-translocational (PRE) to the post-translocational (POST) state as the newly formed A-site-bound peptidyl-tRNA and P-site-bound deacylated tRNA move to the P and E sites, respectively. Catalyzes the coordinated movement of the two tRNA molecules, the mRNA and conformational changes in the ribosome. This Rickettsia africae (strain ESF-5) protein is Elongation factor G.